Reading from the N-terminus, the 78-residue chain is Large ribosomal subunit protein bL28 (78 aa).

The interval 1–20 (MSRVCQVTGKGPVTGNNISH) is disordered.

The protein belongs to the bacterial ribosomal protein bL28 family.

This is Large ribosomal subunit protein bL28 from Pseudomonas putida (strain ATCC 700007 / DSM 6899 / JCM 31910 / BCRC 17059 / LMG 24140 / F1).